The sequence spans 523 residues: Bifunctional purine biosynthesis protein PurH (523 aa).

An MGS-like domain is found at 1-154; that stretch reads MTATAGSNKR…KNHPSVAVVT (154 aa).

Belongs to the PurH family.

It carries out the reaction (6R)-10-formyltetrahydrofolate + 5-amino-1-(5-phospho-beta-D-ribosyl)imidazole-4-carboxamide = 5-formamido-1-(5-phospho-D-ribosyl)imidazole-4-carboxamide + (6S)-5,6,7,8-tetrahydrofolate. The enzyme catalyses IMP + H2O = 5-formamido-1-(5-phospho-D-ribosyl)imidazole-4-carboxamide. It functions in the pathway purine metabolism; IMP biosynthesis via de novo pathway; 5-formamido-1-(5-phospho-D-ribosyl)imidazole-4-carboxamide from 5-amino-1-(5-phospho-D-ribosyl)imidazole-4-carboxamide (10-formyl THF route): step 1/1. It participates in purine metabolism; IMP biosynthesis via de novo pathway; IMP from 5-formamido-1-(5-phospho-D-ribosyl)imidazole-4-carboxamide: step 1/1. This is Bifunctional purine biosynthesis protein PurH from Streptomyces coelicolor (strain ATCC BAA-471 / A3(2) / M145).